The primary structure comprises 211 residues: Protein-L-isoaspartate O-methyltransferase (211 aa).

The active site involves Ser60.

It belongs to the methyltransferase superfamily. L-isoaspartyl/D-aspartyl protein methyltransferase family.

The protein localises to the cytoplasm. The catalysed reaction is [protein]-L-isoaspartate + S-adenosyl-L-methionine = [protein]-L-isoaspartate alpha-methyl ester + S-adenosyl-L-homocysteine. Its function is as follows. Catalyzes the methyl esterification of L-isoaspartyl residues in peptides and proteins that result from spontaneous decomposition of normal L-aspartyl and L-asparaginyl residues. It plays a role in the repair and/or degradation of damaged proteins. The chain is Protein-L-isoaspartate O-methyltransferase from Pseudomonas syringae pv. tomato (strain ATCC BAA-871 / DC3000).